The chain runs to 247 residues: Probable transcriptional regulatory protein YPK_2146 (247 aa).

The protein belongs to the TACO1 family.

It localises to the cytoplasm. The chain is Probable transcriptional regulatory protein YPK_2146 from Yersinia pseudotuberculosis serotype O:3 (strain YPIII).